The chain runs to 185 residues: Homeobox expressed in ES cells 1 (185 aa).

A DNA-binding region (homeobox) is located at residues 108–167 (GRRPRTAFTQNQIEVLENVFRVNCYPGIDIREDLAQKLNLEEDRIQIWFQNRRAKLKRSH).

It belongs to the ANF homeobox family. Can form heterodimers with PROP1 in binding to DNA. Interacts with TLE1.

It is found in the nucleus. Required for the normal development of the forebrain, eyes and other anterior structures such as the olfactory placodes and pituitary gland. Possible transcriptional repressor. Binds to the palindromic PIII sequence, 5'-AGCTTGAGTCTAATTGAATTAACTGTAC-3'. HESX1 and PROP1 bind as heterodimers on this palindromic site, and, in vitro, HESX1 can antagonize PROP1 activation. This is Homeobox expressed in ES cells 1 (HESX1) from Pan troglodytes (Chimpanzee).